The primary structure comprises 338 residues: Lipoate-protein ligase A (338 aa).

Positions 29–216 (DPNQRVLFLW…AFFSHYGERV (188 aa)) constitute a BPL/LPL catalytic domain. Residues arginine 71, 76–79 (GAVF), and lysine 134 each bind ATP. Residue lysine 134 coordinates (R)-lipoate.

It belongs to the LplA family. Monomer.

It localises to the cytoplasm. It catalyses the reaction L-lysyl-[lipoyl-carrier protein] + (R)-lipoate + ATP = N(6)-[(R)-lipoyl]-L-lysyl-[lipoyl-carrier protein] + AMP + diphosphate + H(+). Its pathway is protein modification; protein lipoylation via exogenous pathway; protein N(6)-(lipoyl)lysine from lipoate: step 1/2. The protein operates within protein modification; protein lipoylation via exogenous pathway; protein N(6)-(lipoyl)lysine from lipoate: step 2/2. Catalyzes both the ATP-dependent activation of exogenously supplied lipoate to lipoyl-AMP and the transfer of the activated lipoyl onto the lipoyl domains of lipoate-dependent enzymes. This Aeromonas hydrophila subsp. hydrophila (strain ATCC 7966 / DSM 30187 / BCRC 13018 / CCUG 14551 / JCM 1027 / KCTC 2358 / NCIMB 9240 / NCTC 8049) protein is Lipoate-protein ligase A.